Reading from the N-terminus, the 120-residue chain is NAD(P)H-quinone oxidoreductase subunit 3, chloroplastic (120 aa).

The next 3 membrane-spanning stretches (helical) occupy residues Ile-9–Ala-29, Met-64–Met-84, and Val-88–Leu-108.

Belongs to the complex I subunit 3 family. As to quaternary structure, NDH is composed of at least 16 different subunits, 5 of which are encoded in the nucleus.

It is found in the plastid. The protein localises to the chloroplast thylakoid membrane. It carries out the reaction a plastoquinone + NADH + (n+1) H(+)(in) = a plastoquinol + NAD(+) + n H(+)(out). It catalyses the reaction a plastoquinone + NADPH + (n+1) H(+)(in) = a plastoquinol + NADP(+) + n H(+)(out). NDH shuttles electrons from NAD(P)H:plastoquinone, via FMN and iron-sulfur (Fe-S) centers, to quinones in the photosynthetic chain and possibly in a chloroplast respiratory chain. The immediate electron acceptor for the enzyme in this species is believed to be plastoquinone. Couples the redox reaction to proton translocation, and thus conserves the redox energy in a proton gradient. This chain is NAD(P)H-quinone oxidoreductase subunit 3, chloroplastic, found in Oryza nivara (Indian wild rice).